Here is a 314-residue protein sequence, read N- to C-terminus: Thymidylate synthase (314 aa).

DUMP is bound by residues Arg-32 and 176 to 177; that span reads RR. Cys-196 acts as the Nucleophile in catalysis. Residues 216–219, Asn-227, and 257–259 contribute to the dUMP site; these read RSCD and HLY. Asp-219 is a (6R)-5,10-methylene-5,6,7,8-tetrahydrofolate binding site. Ala-313 provides a ligand contact to (6R)-5,10-methylene-5,6,7,8-tetrahydrofolate.

Belongs to the thymidylate synthase family. Bacterial-type ThyA subfamily. Homodimer.

It localises to the cytoplasm. The catalysed reaction is dUMP + (6R)-5,10-methylene-5,6,7,8-tetrahydrofolate = 7,8-dihydrofolate + dTMP. The protein operates within pyrimidine metabolism; dTTP biosynthesis. Catalyzes the reductive methylation of 2'-deoxyuridine-5'-monophosphate (dUMP) to 2'-deoxythymidine-5'-monophosphate (dTMP) while utilizing 5,10-methylenetetrahydrofolate (mTHF) as the methyl donor and reductant in the reaction, yielding dihydrofolate (DHF) as a by-product. This enzymatic reaction provides an intracellular de novo source of dTMP, an essential precursor for DNA biosynthesis. In Novosphingobium aromaticivorans (strain ATCC 700278 / DSM 12444 / CCUG 56034 / CIP 105152 / NBRC 16084 / F199), this protein is Thymidylate synthase.